The following is a 400-amino-acid chain: Snake venom metalloproteinase H2 (400 aa).

An N-terminal signal peptide occupies residues 1 to 6 (FPYQGS). The propeptide occupies 7–176 (STILESGNVN…KKASQLIVST (170 aa)). The region spanning 180-377 (RYMEIVIVVD…ENPPCILNKP (198 aa)) is the Peptidase M12B domain. Ca(2+) contacts are provided by Glu183 and Asp267. Cystine bridges form between Cys291–Cys372, Cys331–Cys356, and Cys333–Cys339. Residue His316 participates in Zn(2+) binding. Residue Glu317 is part of the active site. Zn(2+) contacts are provided by His320 and His326. Positions 372, 375, 387, 390, 392, 394, and 400 each coordinate Ca(2+). A propeptide spanning residues 378-400 (LRTDTVSTPVSGNELLEAGKDYD) is cleaved from the precursor.

The protein belongs to the venom metalloproteinase (M12B) family. P-I subfamily. In terms of assembly, monomer. It depends on Zn(2+) as a cofactor. Expressed by the venom gland.

It is found in the secreted. In terms of biological role, snake venom metalloproteinase that impairs hemostasis in the envenomed animal. The chain is Snake venom metalloproteinase H2 from Deinagkistrodon acutus (Hundred-pace snake).